Reading from the N-terminus, the 1288-residue chain is Contactin-associated protein-like 3 (1288 aa).

Residues 1–25 form the signal peptide; the sequence is MASVAWAVLKVLLLLPTQTWSPVGA. The Extracellular portion of the chain corresponds to 26-1245; sequence GNPPDCDAPL…LVNADRRDSA (1220 aa). In terms of domain architecture, F5/8 type C spans 31–177; that stretch reads CDAPLASALP…IGMRIEVYGC (147 aa). A disulfide bridge connects residues cysteine 31 and cysteine 177. 2 consecutive Laminin G-like domains span residues 183–364 and 370–545; these read VVYF…SFSC and VPVT…IDSC. Residues asparagine 285, asparagine 359, asparagine 441, and asparagine 497 are each glycosylated (N-linked (GlcNAc...) asparagine). Cysteine 332 and cysteine 364 are disulfide-bonded. 4 cysteine pairs are disulfide-bonded: cysteine 513–cysteine 545, cysteine 551–cysteine 562, cysteine 556–cysteine 571, and cysteine 573–cysteine 583. The region spanning 551–583 is the EGF-like 1 domain; sequence CLPSYCEHGGECSQSWDTFSCDCLGTGYTGETC. The Fibrinogen C-terminal domain occupies 584–792; that stretch reads HSSLYEQSCE…LLCRGDQSFW (209 aa). Residues asparagine 623 and asparagine 706 are each glycosylated (N-linked (GlcNAc...) asparagine). The Laminin G-like 3 domain occupies 793–958; the sequence is NSASFNTETS…TVTPGVEPGC (166 aa). Cystine bridges form between cysteine 931–cysteine 958, cysteine 962–cysteine 975, cysteine 969–cysteine 984, and cysteine 986–cysteine 996. The 35-residue stretch at 962–996 folds into the EGF-like 2 domain; it reads CSTYGHLCRNGGRCREKRRGVTCDCAFSAYDGPFC. A Laminin G-like 4 domain is found at 1015-1203; sequence QEHYTLSENS…RGHVAPMARC (189 aa). N-linked (GlcNAc...) asparagine glycans are attached at residues asparagine 1023, asparagine 1073, and asparagine 1120. The cysteines at positions 1167 and 1203 are disulfide-linked. The disordered stretch occupies residues 1215–1236; sequence ELAPRLAGGAGRSGPADEGEPL. A helical membrane pass occupies residues 1246 to 1266; the sequence is VIGGVIAVVIFILLCITAIAI. Topologically, residues 1267 to 1288 are cytoplasmic; the sequence is RIYQQRKLRKENESKVSKKEEC.

Belongs to the neurexin family.

The protein resides in the cell membrane. Its subcellular location is the secreted. This is Contactin-associated protein-like 3 (CNTNAP3) from Homo sapiens (Human).